The primary structure comprises 127 residues: Protein ApaG (127 aa).

In terms of domain architecture, ApaG spans 3–127; that stretch reads DQPPTEIQIS…FRLAAATVFH (125 aa).

In Acidithiobacillus ferrooxidans (strain ATCC 23270 / DSM 14882 / CIP 104768 / NCIMB 8455) (Ferrobacillus ferrooxidans (strain ATCC 23270)), this protein is Protein ApaG.